Reading from the N-terminus, the 148-residue chain is Hemoglobin subunit gamma (148 aa).

The region spanning histidine 3–histidine 148 is the Globin domain. Heme b contacts are provided by histidine 64 and histidine 93.

The protein belongs to the globin family. In terms of assembly, heterotetramer of two alpha chains and two gamma chains in fetal hemoglobin (Hb F). As to expression, red blood cells.

Gamma chains make up the fetal hemoglobin F, in combination with alpha chains. The chain is Hemoglobin subunit gamma (HBG) from Carlito syrichta (Philippine tarsier).